The sequence spans 491 residues: Serine hydroxymethyltransferase (491 aa).

Residues leucine 173 and 177 to 179 (GHL) contribute to the (6S)-5,6,7,8-tetrahydrofolate site. N6-(pyridoxal phosphate)lysine is present on lysine 285.

The protein belongs to the SHMT family. Homodimer. Pyridoxal 5'-phosphate is required as a cofactor.

The protein resides in the cytoplasm. The enzyme catalyses (6R)-5,10-methylene-5,6,7,8-tetrahydrofolate + glycine + H2O = (6S)-5,6,7,8-tetrahydrofolate + L-serine. Its pathway is one-carbon metabolism; tetrahydrofolate interconversion. It functions in the pathway amino-acid biosynthesis; glycine biosynthesis; glycine from L-serine: step 1/1. Functionally, catalyzes the reversible interconversion of serine and glycine with tetrahydrofolate (THF) serving as the one-carbon carrier. This reaction serves as the major source of one-carbon groups required for the biosynthesis of purines, thymidylate, methionine, and other important biomolecules. Also exhibits THF-independent aldolase activity toward beta-hydroxyamino acids, producing glycine and aldehydes, via a retro-aldol mechanism. The sequence is that of Serine hydroxymethyltransferase from Cutibacterium acnes (strain DSM 16379 / KPA171202) (Propionibacterium acnes).